We begin with the raw amino-acid sequence, 584 residues long: Arginine--tRNA ligase (584 aa).

A 'HIGH' region motif is present at residues Pro130–His140.

The protein belongs to the class-I aminoacyl-tRNA synthetase family. In terms of assembly, monomer.

Its subcellular location is the cytoplasm. The enzyme catalyses tRNA(Arg) + L-arginine + ATP = L-arginyl-tRNA(Arg) + AMP + diphosphate. This is Arginine--tRNA ligase from Protochlamydia amoebophila (strain UWE25).